The primary structure comprises 459 residues: Trichothecene 3-O-acetyltransferase TRI101 (459 aa).

Residues Asp-218 and Ile-221 each coordinate Ca(2+). CoA-binding positions include Lys-253, 266 to 269 (FVST), Asp-302, Gln-318, and Arg-343. Position 376 (Asp-376) interacts with Ca(2+). Positions 386 and 390 each coordinate CoA. Glu-449 is a binding site for Ca(2+).

Belongs to the trichothecene 3-O-acetyltransferase family.

It participates in sesquiterpene biosynthesis; trichothecene biosynthesis. In terms of biological role, 3-O-acetyltransferase involved in the biosynthesis of trichothecenes, a very large family of chemically related bicyclic sesquiterpene compounds acting as mycotoxins, including T2-toxin. The biosynthesis of trichothecenes begins with the cyclization of farnesyl diphosphate to trichodiene and is catalyzed by the trichodiene synthase TRI5. Trichodiene undergoes a series of oxygenations catalyzed by the cytochrome P450 monooxygenase TRI4. TRI4 controls the addition of four oxygens at C-2, C-3, C-11, and the C-12, C-13-epoxide to form the intermediate isotrichotriol. Isotrichotriol then undergoes a non-enzymatic isomerization and cyclization to form isotrichodermol. During this process, the oxygen at the C-2 position becomes the pyran ring oxygen and the hydroxyl group at C-11 is lost. More complex type A trichothecenes are built by modifying isotrichodermol through a series of paired hydroxylation and acetylation or acylation steps. Isotrichodermol is converted to isotrichodermin by the acetyltransferase TRI101. TRI101 encodes a C-3 transacetylase that acts as a self-protection or resistance factor during biosynthesis and that the presence of a free C-3 hydroxyl group is a key component of Fusarium trichothecene phytotoxicity. A second hydroxyl group is added to C-15 by the trichothecene C-15 hydroxylase TRI11, producing 15-decalonectrin, which is then acetylated by TRI3, producing calonectrin. A third hydroxyl group is added at C-4 by the cytochrome P450 monooxygenase TRI13, converting calonectrin to 3,15-diacetoxyspirpenol, which is subsequently acetylated bythe acetyltransferase TRI7. A fourth hydroxyl group is added to C-8 by the cytochrome P450 monooxygenase TRI1, followed by the addition of an isovaleryl moiety by TRI16. Finally, the acetyl group is removed from the C-3 position by the trichothecene C-3 esterase TRI8 to produce T-2 toxin. This Fusarium sporotrichioides protein is Trichothecene 3-O-acetyltransferase TRI101.